Reading from the N-terminus, the 73-residue chain is Large ribosomal subunit protein bL31 (73 aa).

Zn(2+) contacts are provided by Cys-16, Cys-18, Cys-37, and Cys-40.

Belongs to the bacterial ribosomal protein bL31 family. Type A subfamily. In terms of assembly, part of the 50S ribosomal subunit. The cofactor is Zn(2+).

Its function is as follows. Binds the 23S rRNA. This is Large ribosomal subunit protein bL31 from Marinobacter nauticus (strain ATCC 700491 / DSM 11845 / VT8) (Marinobacter aquaeolei).